We begin with the raw amino-acid sequence, 85 residues long: UPF0386 protein Plav_1374 (85 aa).

The protein belongs to the UPF0386 family.

This Parvibaculum lavamentivorans (strain DS-1 / DSM 13023 / NCIMB 13966) protein is UPF0386 protein Plav_1374.